Here is a 249-residue protein sequence, read N- to C-terminus: Nicotinamide/nicotinic acid mononucleotide adenylyltransferase (249 aa).

The NAD(+) site is built by Ser-34 and Phe-35. 2 residues coordinate ATP: His-42 and Lys-75. The NAD(+) site is built by Thr-112, Gly-141, Asp-143, Trp-154, Arg-173, and Asn-204. 209–210 (SR) contributes to the ATP binding site.

The protein belongs to the eukaryotic NMN adenylyltransferase family. Requires a divalent metal cation as cofactor.

It carries out the reaction beta-nicotinamide D-ribonucleotide + ATP + H(+) = diphosphate + NAD(+). The catalysed reaction is nicotinate beta-D-ribonucleotide + ATP + H(+) = deamido-NAD(+) + diphosphate. Its pathway is cofactor biosynthesis; NAD(+) biosynthesis; deamido-NAD(+) from nicotinate D-ribonucleotide: step 1/1. It participates in cofactor biosynthesis; NAD(+) biosynthesis; NAD(+) from nicotinamide D-ribonucleotide: step 1/1. In terms of biological role, catalyzes the formation of NAD(+) from nicotinamide mononucleotide (NMN) and ATP. Can also use the deamidated form; nicotinic acid mononucleotide (NaMN) as substrate. This is Nicotinamide/nicotinic acid mononucleotide adenylyltransferase from Oryza sativa subsp. japonica (Rice).